A 181-amino-acid polypeptide reads, in one-letter code: MKNLAPGLLLAMPQLGDPNFYRSVVLMLEHSESGSMGLVINRGAPLTLGELARGQNLGIAAGRKEHSVYLGGPVEPQRGFVLHDDTEQREKHSVLPGLFLSVTLDALGPLLTNPNPRLRFCLGYAGWGPRQLESEIAAGSWLFTEATAEAVLGHEPSKLWDTTLRGMGVDPAMLVMGRGMN.

The protein belongs to the UPF0301 (AlgH) family.

This chain is UPF0301 protein MXAN_2022, found in Myxococcus xanthus (strain DK1622).